The sequence spans 332 residues: Malate dehydrogenase (332 aa).

NAD(+) is bound by residues 16 to 17 (QI), aspartate 43, and glycine 90. Arginine 99 is an oxaloacetate binding site. NAD(+) is bound by residues glutamine 113 and asparagine 132. 4 residues coordinate oxaloacetate: asparagine 132, arginine 163, histidine 188, and serine 243. Residue histidine 188 is the Proton acceptor of the active site.

The protein belongs to the LDH/MDH superfamily. MDH type 2 family. Homodimer.

It localises to the cytoplasm. It carries out the reaction (S)-malate + NAD(+) = oxaloacetate + NADH + H(+). In terms of biological role, catalyzes the reduction of the carbonyl group of oxalacetic acid. No activity with pulegone. This is Malate dehydrogenase (MD1) from Nicotiana tabacum (Common tobacco).